The chain runs to 343 residues: L-lysine cyclodeaminase (343 aa).

The protein belongs to the ornithine cyclodeaminase/mu-crystallin family. Requires NAD(+) as cofactor.

It catalyses the reaction L-lysine = L-pipecolate + NH4(+). It functions in the pathway antibiotic biosynthesis. With respect to regulation, inhibited by nipecotic acid and thiazolidine-2-carboxylic acid. Functionally, converts L-lysine to L-pipecolate, which is incorporated into multiple secondary metabolite products, including rapamycin, tobulysin, virginiamycin and pristinamycin. In Streptomyces rapamycinicus (strain ATCC 29253 / DSM 41530 / NRRL 5491 / AYB-994) (Streptomyces hygroscopicus (strain ATCC 29253)), this protein is L-lysine cyclodeaminase (rapL).